We begin with the raw amino-acid sequence, 388 residues long: Zinc finger protein ubi-d4 A (388 aa).

Positions 60–190 (GPGSAPGQLY…AKGKGIGSAR (131 aa)) are disordered. Composition is skewed to basic and acidic residues over residues 97-107 (PDPEQMLKKEG) and 123-137 (DPIE…RDDD). Positions 156-170 (PDDFLDDLDDEDYEE) are enriched in acidic residues. The C2H2-type zinc finger occupies 205–228 (YACDICGKRYKNRPGLSYHYAHSH). A disordered region spans residues 233-264 (EGAGAEDKEDSQPPTPIMHRPEEQKSKKGPDG). The span at 251-262 (HRPEEQKSKKGP) shows a compositional bias: basic and acidic residues. 2 consecutive PHD-type zinc fingers follow at residues 269–329 (NNYC…CKCC) and 326–376 (CKCC…CLDL).

It belongs to the requiem/DPF family.

It is found in the cytoplasm. It localises to the nucleus. May be a transcription factor required for the apoptosis response following survival factor withdrawal from myeloid cells. Might also have a role in the development and maturation of lymphoid cells. In Xenopus laevis (African clawed frog), this protein is Zinc finger protein ubi-d4 A (req-a).